Here is a 688-residue protein sequence, read N- to C-terminus: Elongation factor G (688 aa).

The tr-type G domain occupies 8 to 282; sequence DKFRNFGIMA…GVVDYLPSPL (275 aa). Residues 17–24, 81–85, and 135–138 contribute to the GTP site; these read AHIDAGKT, DTPGH, and NKMD.

Belongs to the TRAFAC class translation factor GTPase superfamily. Classic translation factor GTPase family. EF-G/EF-2 subfamily.

Its subcellular location is the cytoplasm. In terms of biological role, catalyzes the GTP-dependent ribosomal translocation step during translation elongation. During this step, the ribosome changes from the pre-translocational (PRE) to the post-translocational (POST) state as the newly formed A-site-bound peptidyl-tRNA and P-site-bound deacylated tRNA move to the P and E sites, respectively. Catalyzes the coordinated movement of the two tRNA molecules, the mRNA and conformational changes in the ribosome. This chain is Elongation factor G, found in Clostridium botulinum (strain Eklund 17B / Type B).